The following is a 364-amino-acid chain: UDP-N-acetylglucosamine--N-acetylmuramyl-(pentapeptide) pyrophosphoryl-undecaprenol N-acetylglucosamine transferase (364 aa).

UDP-N-acetyl-alpha-D-glucosamine contacts are provided by residues Thr-10–Gly-12, Asn-124, Arg-166, Ser-196, Ile-252, and Gln-297.

This sequence belongs to the glycosyltransferase 28 family. MurG subfamily.

The protein localises to the cell membrane. The enzyme catalyses di-trans,octa-cis-undecaprenyl diphospho-N-acetyl-alpha-D-muramoyl-L-alanyl-D-glutamyl-meso-2,6-diaminopimeloyl-D-alanyl-D-alanine + UDP-N-acetyl-alpha-D-glucosamine = di-trans,octa-cis-undecaprenyl diphospho-[N-acetyl-alpha-D-glucosaminyl-(1-&gt;4)]-N-acetyl-alpha-D-muramoyl-L-alanyl-D-glutamyl-meso-2,6-diaminopimeloyl-D-alanyl-D-alanine + UDP + H(+). The protein operates within cell wall biogenesis; peptidoglycan biosynthesis. Its function is as follows. Cell wall formation. Catalyzes the transfer of a GlcNAc subunit on undecaprenyl-pyrophosphoryl-MurNAc-pentapeptide (lipid intermediate I) to form undecaprenyl-pyrophosphoryl-MurNAc-(pentapeptide)GlcNAc (lipid intermediate II). The polypeptide is UDP-N-acetylglucosamine--N-acetylmuramyl-(pentapeptide) pyrophosphoryl-undecaprenol N-acetylglucosamine transferase (Ruminiclostridium cellulolyticum (strain ATCC 35319 / DSM 5812 / JCM 6584 / H10) (Clostridium cellulolyticum)).